Here is a 1025-residue protein sequence, read N- to C-terminus: Error-prone DNA polymerase (1025 aa).

This sequence belongs to the DNA polymerase type-C family. DnaE2 subfamily.

The protein localises to the cytoplasm. It catalyses the reaction DNA(n) + a 2'-deoxyribonucleoside 5'-triphosphate = DNA(n+1) + diphosphate. DNA polymerase involved in damage-induced mutagenesis and translesion synthesis (TLS). It is not the major replicative DNA polymerase. This Alkalilimnicola ehrlichii (strain ATCC BAA-1101 / DSM 17681 / MLHE-1) protein is Error-prone DNA polymerase.